We begin with the raw amino-acid sequence, 440 residues long: Thymidine phosphorylase (440 aa).

It belongs to the thymidine/pyrimidine-nucleoside phosphorylase family. In terms of assembly, homodimer.

It carries out the reaction thymidine + phosphate = 2-deoxy-alpha-D-ribose 1-phosphate + thymine. It functions in the pathway pyrimidine metabolism; dTMP biosynthesis via salvage pathway; dTMP from thymine: step 1/2. In terms of biological role, the enzymes which catalyze the reversible phosphorolysis of pyrimidine nucleosides are involved in the degradation of these compounds and in their utilization as carbon and energy sources, or in the rescue of pyrimidine bases for nucleotide synthesis. This chain is Thymidine phosphorylase, found in Salmonella heidelberg (strain SL476).